Here is a 239-residue protein sequence, read N- to C-terminus: Carboxy-S-adenosyl-L-methionine synthase (239 aa).

S-adenosyl-L-methionine contacts are provided by residues Y35, 64-66 (GCS), 88-89 (DN), and R195.

This sequence belongs to the class I-like SAM-binding methyltransferase superfamily. Cx-SAM synthase family. Homodimer.

It carries out the reaction prephenate + S-adenosyl-L-methionine = carboxy-S-adenosyl-L-methionine + 3-phenylpyruvate + H2O. Its function is as follows. Catalyzes the conversion of S-adenosyl-L-methionine (SAM) to carboxy-S-adenosyl-L-methionine (Cx-SAM). The sequence is that of Carboxy-S-adenosyl-L-methionine synthase from Helicobacter pylori (strain HPAG1).